Consider the following 435-residue polypeptide: Probable aminotransferase gliI (435 aa).

Lys-266 carries the N6-(pyridoxal phosphate)lysine modification.

It belongs to the class-I pyridoxal-phosphate-dependent aminotransferase family. It depends on pyridoxal 5'-phosphate as a cofactor.

It participates in mycotoxin biosynthesis. In terms of biological role, probable aminotransferase; part of the gene cluster that mediates the biosynthesis of gliotoxin, a member of the epipolythiodioxopiperazine (ETP) class of toxins characterized by a disulfide bridged cyclic dipeptide. The first step in gliotoxin biosynthesis is the condensation of serine and phenylalanine to form the cyclo-L-phenylalanyl-L-serine diketopiperazine (DKP) by the NRPS gliP. GliP is also able to produce the DKP cyclo-L-tryptophanyl-L-serine, suggesting that the substrate specificity of the first adenylation (A) domain in gliP is sufficiently relaxed to accommodate both L-Phe and L-Trp. The cytochrome P450 monooxygenase gliC has been shown to catalyze the subsequent hydroxylation of the alpha-carbon of L-Phe in cyclo-L-phenylalanyl-L-serine whereas the second cytochrome P450 enzyme, gliF, is presumably involved in the modification of the DKP side chain. The glutathione S-transferase (GST) gliG then forms a bis-glutathionylated biosynthetic intermediate which is responsible for the sulfurization of gliotoxin. This bis-glutathionylated intermediate is subsequently processed by the gamma-glutamyl cyclotransferase gliK to remove both gamma-glutamyl moieties. Subsequent processing via gliI yields a biosynthetic intermediate, which is N-methylated via the N-methyltransferase gliN, before the gliotoxin oxidoreductase gliT-mediated disulfide bridge closure. GliN-mediated amide methylation confers stability to ETP, damping the spontaneous formation of tri- and tetrasulfides. Intracellular dithiol gliotoxin oxidized by gliT is subsequently effluxed by gliA. Gliotoxin contributes to pathogenesis during invasive aspergillosis. In macrophages and neutrophils, gliotoxin showed inhibition of various different cell functions including cytokine production, antigen presentation, phagocytosis, and production of reactive oxygen species. The sequence is that of Probable aminotransferase gliI from Aspergillus fumigatus (strain ATCC MYA-4609 / CBS 101355 / FGSC A1100 / Af293) (Neosartorya fumigata).